A 321-amino-acid polypeptide reads, in one-letter code: MIDFRPFYQHIATTHLSAWLETLPLQLKQWEKQTHGDYAKWAKIVDFLPHLDADHIDLKSAVKSESVSPLSAGEQQRLVYHLKQLMPWRKGPYHLHGIHIDCEWRSDFKWDRVLPHLAPLKDRTILDVGCGSGYHMWRMVGEGAKIVVGIDPTELFLCQFEAVRKLLNNDRRANLIPLGIEQMQPLAAFDTVFSMGVLYHRKSPLDHLSQLKNQLVRGGELVLETLVVDGDINTVLVPADRYAKMKNVYFIPSVPALINWLEKVGFKNVRCVDVAPTSLAEQRKTDWLENESLIDFLDPCDHTKTIEGYQAPTRAVILANK.

Residues K90, W104, K109, G129, 151-153 (DPT), 180-181 (IE), M195, Y199, and R314 each bind carboxy-S-adenosyl-L-methionine.

It belongs to the class I-like SAM-binding methyltransferase superfamily. CmoB family. In terms of assembly, homotetramer.

The catalysed reaction is carboxy-S-adenosyl-L-methionine + 5-hydroxyuridine(34) in tRNA = 5-carboxymethoxyuridine(34) in tRNA + S-adenosyl-L-homocysteine + H(+). Its function is as follows. Catalyzes carboxymethyl transfer from carboxy-S-adenosyl-L-methionine (Cx-SAM) to 5-hydroxyuridine (ho5U) to form 5-carboxymethoxyuridine (cmo5U) at position 34 in tRNAs. This is tRNA U34 carboxymethyltransferase from Pasteurella multocida (strain Pm70).